The chain runs to 352 residues: Mitochondrial adenine nucleotide transporter ADNT1 (352 aa).

Solcar repeat units follow at residues 36–123 (KSIC…ASNG), 139–227 (LTPL…LKDW), and 242–343 (LTVV…VKDV). The next 6 helical transmembrane spans lie at 41 to 61 (SLFA…PLER), 100 to 120 (GTNC…YEQA), 145 to 162 (LGAG…TYPM), 202 to 221 (GWLP…FSVY), 242 to 263 (LTVV…TIAY), and 324 to 340 (VKVV…YEMV).

The protein belongs to the mitochondrial carrier (TC 2.A.29) family. As to expression, expressed in seedling radicles and roots, vasculature of cotyledons, leaf primordia, leaves and sepals.

It is found in the mitochondrion inner membrane. Its activity is regulated as follows. Inhibited by pyridoxal 5-phosphate, bathophenanthroline, mersalyl, p-hydroxymercuribenzoate and tannic acid. Mitochondrial adenylate carrier that catalyzes specifically the transport of ATP, ADP and AMP by a counter-exchange mechanism across the inner mitochondrial membrane. Substrate preference in reconstituted proteoliposomes is ATP &gt; AMP &gt; ADP. May play a role in oxidative phosphorylation and be important for the provision of energy required to support growth in heterotrophic tissues. This chain is Mitochondrial adenine nucleotide transporter ADNT1 (ADNT1), found in Arabidopsis thaliana (Mouse-ear cress).